Reading from the N-terminus, the 48-residue chain is Lantibiotic salivaricin-A (48 aa).

Positions 1–26 (MKNSKDILNNAIEEVSEKELMEVAGG) are excised as a propeptide. Cross-links (beta-methyllanthionine (Thr-Cys)) lie at residues 35–40 (TITDDC) and 37–47 (TDDCPNSVFVC). A cross-link (lanthionine (Ser-Cys)) is located at residues 43–48 (SVFVCC).

The protein belongs to the type A lantibiotic family. In terms of processing, maturation of lantibiotics involves the enzymatic conversion of Thr, and Ser into dehydrated AA and the formation of thioether bonds with cysteine. This is followed by membrane translocation and cleavage of the modified precursor.

Functionally, lanthionine-containing peptide antibiotic (lantibiotic) active on Gram-positive bacteria. The bactericidal activity of lantibiotics is based on depolarization of energized bacterial cytoplasmic membranes, initiated by the formation of aqueous transmembrane pores. The protein is Lantibiotic salivaricin-A (salA) of Streptococcus salivarius.